We begin with the raw amino-acid sequence, 519 residues long: 4-nitrophenol 2-monooxygenase, oxygenase component (519 aa).

Belongs to the FADH(2)-utilizing monooxygenase family. As to quaternary structure, homotetramer. 4-nitrophenol 2-monooxygenase complex consists of an oxygenase component NphA1 and a flavin reductase component NphA2. Requires FAD as cofactor.

It carries out the reaction 4-nitrophenol + NADH + O2 + H(+) = 4-nitrocatechol + NAD(+) + H2O. With respect to regulation, partially inhibited by concentrations of FAD above 10 uM and completely inhibited by concentrations above 50 uM. Its function is as follows. Utilizes the flavins supplied by NphA2 to catalyze the degradation of 4-nitrophenol (4-NP) via 4-nitrocatechol (4-NC) which is used as the sole carbon, nitrogen, and energy source. Can also degrade phenol and 4-chlorophenol as rapidly as 4-NP. The polypeptide is 4-nitrophenol 2-monooxygenase, oxygenase component (nphA1) (Rhodococcus sp).